A 773-amino-acid chain; its full sequence is Ribosomal protein S6 kinase alpha-4 (773 aa).

A Protein kinase 1 domain is found at 33 to 301; sequence FALLKVLGTG…AQEVKSHPFF (269 aa). ATP-binding positions include 39 to 47 and Lys65; that span reads LGTGAYGKV. Asp161 functions as the Proton acceptor in the catalytic mechanism. A Phosphoserine; by autocatalysis modification is found at Ser196. The AGC-kinase C-terminal domain maps to 302–371; it reads QGLDWVALAA…VAPSILFDHN (70 aa). Residue Ser343 is modified to Phosphoserine; by MAPK1, MAPK3 and MAPK14. A Phosphoserine modification is found at Ser347. Phosphoserine; by autocatalysis occurs at positions 360 and 365. ATP is bound by residues 417–425 and Lys440; that span reads LGQGSFSVC. The Protein kinase 2 domain occupies 417-674; sequence LGQGSFSVCR…LEGLRSSSWL (258 aa). Asp530 functions as the Proton acceptor in the catalytic mechanism. Phosphothreonine is present on Thr542. At Thr568 the chain carries Phosphothreonine; by MAPK1, MAPK3 and MAPK14. Phosphoserine is present on residues Ser634 and Ser678. Disordered regions lie at residues 674–696 and 728–773; these read LQDG…SSGP and AKRR…LSPS. Thr687 carries the post-translational modification Phosphothreonine. 2 positions are modified to phosphoserine; by autocatalysis: Ser737 and Ser745.

The protein belongs to the protein kinase superfamily. AGC Ser/Thr protein kinase family. S6 kinase subfamily. Forms a complex with either MAPK1/ERK2 or MAPK3/ERK1 in quiescent cells which transiently dissociates following mitogenic stimulation. Also associates with MAPK14/p38-alpha. Activated RPS6KA4 associates with and phosphorylates the NF-kappa-B p65 subunit RELA. It depends on Mg(2+) as a cofactor. Post-translationally, ser-343 and Thr-568 phosphorylation is required for kinase activity. Ser-343 and Ser-196 are autophosphorylated by the C-terminal kinase domain, and their phosphorylation is essential for the catalytic activity of the N-terminal kinase domain. Phosphorylated at Ser-343, Thr-568 and Thr-687 by MAPK1/ERK2, MAPK3/ERK1 and MAPK14/p38-alpha. Autophosphorylated at Ser-737 and Ser-745 by the N-terminal kinase domain.

The protein localises to the nucleus. It carries out the reaction L-seryl-[protein] + ATP = O-phospho-L-seryl-[protein] + ADP + H(+). It catalyses the reaction L-threonyl-[protein] + ATP = O-phospho-L-threonyl-[protein] + ADP + H(+). Activated by phosphorylation at Ser-343, Thr-568 and Thr-687 by MAPK1/ERK2, MAPK3/ERK1 and MAPK14/p38-alpha, and by further autophosphorylation of Ser-196, Ser-360 and Ser-365 by the activated C-terminal kinase domain. Its function is as follows. Serine/threonine-protein kinase that is required for the mitogen or stress-induced phosphorylation of the transcription factors CREB1 and ATF1 and for the regulation of the transcription factor RELA, and that contributes to gene activation by histone phosphorylation and functions in the regulation of inflammatory genes. Phosphorylates CREB1 and ATF1 in response to mitogenic or stress stimuli such as UV-C irradiation, epidermal growth factor (EGF) and anisomycin. Plays an essential role in the control of RELA transcriptional activity in response to TNF. Phosphorylates 'Ser-10' of histone H3 in response to mitogenics, stress stimuli and EGF, which results in the transcriptional activation of several immediate early genes, including proto-oncogenes c-fos/FOS and c-jun/JUN. May also phosphorylate 'Ser-28' of histone H3. Mediates the mitogen- and stress-induced phosphorylation of high mobility group protein 1 (HMGN1/HMG14). In lipopolysaccharide-stimulated primary macrophages, acts downstream of the Toll-like receptor TLR4 to limit the production of pro-inflammatory cytokines. Functions probably by inducing transcription of the MAP kinase phosphatase DUSP1 and the anti-inflammatory cytokine interleukin 10 (IL10), via CREB1 and ATF1 transcription factors. The protein is Ribosomal protein S6 kinase alpha-4 (Rps6ka4) of Mus musculus (Mouse).